The primary structure comprises 419 residues: UDP-N-acetylglucosamine 1-carboxyvinyltransferase (419 aa).

22-23 (KN) is a binding site for phosphoenolpyruvate. Position 92 (R92) interacts with UDP-N-acetyl-alpha-D-glucosamine. C116 acts as the Proton donor in catalysis. C116 is subject to 2-(S-cysteinyl)pyruvic acid O-phosphothioketal. Positions 307 and 329 each coordinate UDP-N-acetyl-alpha-D-glucosamine.

This sequence belongs to the EPSP synthase family. MurA subfamily.

It is found in the cytoplasm. The enzyme catalyses phosphoenolpyruvate + UDP-N-acetyl-alpha-D-glucosamine = UDP-N-acetyl-3-O-(1-carboxyvinyl)-alpha-D-glucosamine + phosphate. Its pathway is cell wall biogenesis; peptidoglycan biosynthesis. Functionally, cell wall formation. Adds enolpyruvyl to UDP-N-acetylglucosamine. This is UDP-N-acetylglucosamine 1-carboxyvinyltransferase from Pseudothermotoga lettingae (strain ATCC BAA-301 / DSM 14385 / NBRC 107922 / TMO) (Thermotoga lettingae).